Consider the following 687-residue polypeptide: Adhesion G-protein coupled receptor G1 (687 aa).

An N-terminal signal peptide occupies residues 1–25; it reads MTAQSLLQTTLFLLSLLFLVQGAHG. 26-33 is a binding site for heparin; that stretch reads RGHREDFR. Residues 26-402 lie on the Extracellular side of the membrane; that stretch reads RGHREDFRFC…VEVDAVHKHY (377 aa). Disulfide bonds link cysteine 35-cysteine 91 and cysteine 121-cysteine 177. 3 N-linked (GlcNAc...) asparagine glycosylation sites follow: asparagine 39, asparagine 148, and asparagine 171. Position 190 to 200 (190 to 200) interacts with heparin; it reads LKHPQKASRRP. The GAIN-B domain occupies 224 to 395; sequence DTVSFEEDRI…AVLMVSSVEV (172 aa). N-linked (GlcNAc...) asparagine glycans are attached at residues asparagine 234, asparagine 303, asparagine 324, and asparagine 341. 2 disulfides stabilise this stretch: cysteine 346–cysteine 377 and cysteine 366–cysteine 379. The segment at 346–395 is GPS; that stretch reads CVFWVEDPTLSSPGHWSSAGCETVRRETQTSCLCNHLTYFAVLMVSSVEV. The tract at residues 384 to 397 is stachel; the sequence is YFAVLMVSSVEVDA. The chain crosses the membrane as a helical span at residues 403-423; sequence LSLLSYVGCVVSALACVVTIA. At 424 to 442 the chain is on the cytoplasmic side; it reads AYLCSRRKPRDYTIKVHMN. The helical transmembrane segment at 443–463 threads the bilayer; the sequence is LLLAVFLLDTSFLLSEPVALT. Residues 464–470 are Extracellular-facing; the sequence is GSEAGCR. A helical transmembrane segment spans residues 471–491; sequence ASAIFLHFSLLACLSWMGLEG. At 492-512 the chain is on the cytoplasmic side; that stretch reads YNLYRLVVEVFGTYVPGYLLK. The helical transmembrane segment at 513 to 533 threads the bilayer; the sequence is LSAMGWGFPIFLVTLVALVDV. The Extracellular segment spans residues 534 to 570; it reads DNYGPIILAVHRTPEGVIYPSMCWIRDSLVSYITNLG. Residues 571 to 591 form a helical membrane-spanning segment; sequence LFSLVFLFNMAMLATMVVQIL. The Cytoplasmic segment spans residues 592 to 603; that stretch reads RLRPHTQKWSHV. A helical transmembrane segment spans residues 604 to 624; the sequence is LTLLGLSLVLGLPWALIFFSF. At 625-630 the chain is on the extracellular side; sequence ASGTFQ. A helical membrane pass occupies residues 631–651; the sequence is LVILYLFSIITSFQGFLIFIW. Residues 652 to 687 are Cytoplasmic-facing; sequence YWSMRLQARGGPSPLKSNSDSARLPISSGSTSSSRI. A disordered region spans residues 664-687; sequence SPLKSNSDSARLPISSGSTSSSRI. Residues 678–687 show a composition bias toward low complexity; that stretch reads SSGSTSSSRI.

This sequence belongs to the G-protein coupled receptor 2 family. LN-TM7 subfamily. In terms of assembly, heterodimer of 2 chains generated by proteolytic processing; the large extracellular N-terminal fragment (ADGRG1 NT) and the membrane-bound C-terminal fragment (ADGRG1-CT) predominantly remain associated and non-covalently linked. ADGRG1 NT self-associates in a trans-trans manner; the homophilic interaction enhances receptor signaling. Interacts with TGM2. Interacts with heparin; leading to the reduction of ADGRG1 shedding. Interacts with COL3A1. Part of a GPCR-tetraspanin complex at least consisting of ADGRG1, CD81, eventually CD9, and GNA11 in which CD81 is enhancing the association of ADGRG1 with GNA11. Autoproteolytically cleaved into 2 fragments; the large extracellular N-terminal fragment (ADGRG1 NT) and the membrane-bound C-terminal fragment (ADGRG1 CT) predominantly remain associated and non-covalently linked. Shedding to yield the secreted ADGRG1 N-terminal fragment seems to involve metalloprotease(s). Post-translationally, ubiquitinated. Undergoes polyubiquitination upon activation.

Its subcellular location is the cell membrane. The protein localises to the secreted. It localises to the membrane raft. Its activity is regulated as follows. Forms a heterodimer of 2 chains generated by proteolytic processing that remain associated through non-covalent interactions mediated by the GAIN-B domain. In the inactivated receptor, the Stachel sequence (also named stalk) is embedded in the GAIN-B domain, where it adopts a beta-strand conformation. On activation, the Stachel moves into the 7 transmembrane region and adopts a twisted hook-shaped configuration that forms contacts within the receptor, leading to coupling of a G-alpha protein, which activates signaling. The cleaved GAIN-B and N-terminal domains can then dissociate from the rest of the receptor. In terms of biological role, adhesion G-protein coupled receptor (aGPCR) for steroid hormone 17alpha-hydroxypregnenolone (17-OH), which is involved in cell adhesion and cell-cell interactions. Ligand binding causes a conformation change that triggers signaling via guanine nucleotide-binding proteins (G proteins) and modulates the activity of downstream effectors, such as RhoA pathway. ADGRG1 is coupled to G(12) and/or G(13) G proteins (GNA12 and GNA13, respectively) and mediates the activation Rho small GTPases. Acts as a potent suppressor of ferroptosis: binding to 17-OH-binding initiates signaling that down-regulates CD36 and alleviates ferroptosis-induced liver injury. Ligand-binding also induces cell adhesion activity via association with proteins such as collagen III/COL3A1 and TGM2. Mediates cell matrix adhesion in developing neurons and hematopoietic stem cells. Involved in cortical development, specifically in maintenance of the pial basement membrane integrity and in cortical lamination: association with COL3A1 in the developing brain inhibits neuronal migration via activation of the RhoA pathway. Together with TGM2, acts as a regulator of myelination and myelin repair in oligodendrocyte precursor cells. Acts as a hemostatic sensor of shear force: G protein-coupled receptor signaling is activated in response to shear force in platelets, promoting G(13) G protein signaling, and platelet shape change and aggregation in a COL3A1-dependent manner. Acts as an inhibitor of VEGFA production thereby inhibiting angiogenesis through a signaling pathway mediated by PRKCA. Plays a role in the maintenance of hematopoietic stem cells in bone marrow niche. Plays an essential role in testis development. This is Adhesion G-protein coupled receptor G1 (ADGRG1) from Pan troglodytes (Chimpanzee).